We begin with the raw amino-acid sequence, 280 residues long: Keratin, type I cytoskeletal 47 kDa (280 aa).

The segment at 1-81 (MSFRSSSSYS…SSSFSSFGGN (81 aa)) is head. The segment at 82–117 (DKQTMQNLNDRLASYLEKVRALEAANADLELKIREW) is coil 1A. One can recognise an IF rod domain in the interval 82-280 (DKQTMQNLND…RDAELWFNQK (199 aa)). Positions 118–139 (YEKQKGSGIGAASKDFSKYFEI) are linker 1. Residues 140-231 (ISDLRNKILF…KNHEEEMSIA (92 aa)) are coil 1B. Residues 232–254 (KGSAAGQVTVEMDAAPGVDLNKI) form a linker 12 region. A coil 2 region spans residues 255–280 (LSDMRADYETLAEKNRRDAELWFNQK).

It belongs to the intermediate filament family. In terms of assembly, heterotetramer of two type I and two type II keratins.

This chain is Keratin, type I cytoskeletal 47 kDa (xk81b1), found in Xenopus laevis (African clawed frog).